Here is a 336-residue protein sequence, read N- to C-terminus: uncharacterized protein (336 aa).

Disordered stretches follow at residues 29-93 and 116-147; these read GGVS…HSGA and LQER…GVTG. Composition is skewed to polar residues over residues 70-82 and 125-141; these read SGGS…TSTA and PWRT…SQPH.

This is an uncharacterized protein from Bos taurus (Bovine).